The following is a 197-amino-acid chain: Signal peptidase complex catalytic subunit SEC11 (197 aa).

Topologically, residues 1 to 14 (MLSSLAPYMANPRQ) are cytoplasmic. The helical; Signal-anchor for type II membrane protein transmembrane segment at 15-33 (TLTQVLNFALVLSTAFMLW) threads the bilayer. The Lumenal segment spans residues 34 to 197 (KGLSVVTNST…MGLMVVLQRE (164 aa)). N-linked (GlcNAc...) asparagine glycosylation is present at N41. Active-site charge relay system residues include S53 and H92. The segment covering 102 to 115 (PGREDKKSVKKGGE) has biased composition (basic and acidic residues). Residues 102 to 134 (PGREDKKSVKKGGEEGEETSSTPSQKLLTKGDN) form a disordered region. Residue D139 is the Charge relay system of the active site. The interval 183–194 (VLLGFMGLMVVL) is C-terminal short (CTS) helix.

The protein belongs to the peptidase S26B family. As to quaternary structure, component of the signal peptidase complex (SPC) composed of a catalytic subunit SEC11 and three accessory subunits SPC1, SPC2 and SPC3. The complex induces a local thinning of the ER membrane which is used to measure the length of the signal peptide (SP) h-region of protein substrates. This ensures the selectivity of the complex towards h-regions shorter than 18-20 amino acids. SPC associates with the translocon complex.

The protein localises to the endoplasmic reticulum membrane. The catalysed reaction is Cleavage of hydrophobic, N-terminal signal or leader sequences from secreted and periplasmic proteins.. Catalytic component of the signal peptidase complex (SPC) which catalyzes the cleavage of N-terminal signal sequences from nascent proteins as they are translocated into the lumen of the endoplasmic reticulum. Specifically cleaves N-terminal signal peptides that contain a hydrophobic alpha-helix (h-region) shorter than 18-20 amino acids. This chain is Signal peptidase complex catalytic subunit SEC11 (SEC11), found in Paracoccidioides lutzii (strain ATCC MYA-826 / Pb01) (Paracoccidioides brasiliensis).